A 372-amino-acid polypeptide reads, in one-letter code: Lipid-A-disaccharide synthase (372 aa).

This sequence belongs to the LpxB family.

It catalyses the reaction a lipid X + a UDP-2-N,3-O-bis[(3R)-3-hydroxyacyl]-alpha-D-glucosamine = a lipid A disaccharide + UDP + H(+). Its pathway is bacterial outer membrane biogenesis; LPS lipid A biosynthesis. Condensation of UDP-2,3-diacylglucosamine and 2,3-diacylglucosamine-1-phosphate to form lipid A disaccharide, a precursor of lipid A, a phosphorylated glycolipid that anchors the lipopolysaccharide to the outer membrane of the cell. The polypeptide is Lipid-A-disaccharide synthase (Thiobacillus denitrificans (strain ATCC 25259 / T1)).